Reading from the N-terminus, the 379-residue chain is EP300-interacting inhibitor of differentiation 3 (379 aa).

Residues 32-58 (LKQVEEEEEVEALKVEVAAASDTESDT) adopt a coiled-coil conformation.

Belongs to the NSE4 family. In terms of assembly, component of the SMC5-SMC6 complex which consists at least of SMC5, SMC6, NSMCE2, NSMCE1, NSMCE4A or EID3 and NSMCE3. NSMCE1, NSMCE4A or EID3 and NSMCE3 probably form a subcomplex that bridges the head domains of the SMC5:SMC6 heterodimer. Homodimer, and heterodimer with EID2. Interacts with the C-terminal region of CREBBP.

The protein resides in the nucleus. It is found in the cytoplasm. It localises to the chromosome. Its subcellular location is the telomere. In terms of biological role, tissue-specific component of the SMC5-SMC6 complex, a complex involved in repair of DNA double-strand breaks by homologous recombination. The complex may promote sister chromatid homologous recombination by recruiting the SMC1-SMC3 cohesin complex to double-strand breaks. The complex is required for telomere maintenance via recombination and mediates sumoylation of shelterin complex (telosome) components. Functionally, acts as a repressor of nuclear receptor-dependent transcription possibly by interfering with CREBBP-dependent coactivation. May function as a coinhibitor of other CREBBP/EP300-dependent transcription factors. The chain is EP300-interacting inhibitor of differentiation 3 from Bos taurus (Bovine).